The following is a 344-amino-acid chain: Anthranilate phosphoribosyltransferase (344 aa).

5-phospho-alpha-D-ribose 1-diphosphate-binding positions include G86, 89–90 (GD), T94, 96–99 (NIST), 114–122 (KHGNKSASG), and S126. G86 provides a ligand contact to anthranilate. Residue S98 participates in Mg(2+) binding. Anthranilate is bound at residue N117. R172 contributes to the anthranilate binding site. Mg(2+) is bound by residues D231 and E232.

The protein belongs to the anthranilate phosphoribosyltransferase family. In terms of assembly, homodimer. The cofactor is Mg(2+).

The enzyme catalyses N-(5-phospho-beta-D-ribosyl)anthranilate + diphosphate = 5-phospho-alpha-D-ribose 1-diphosphate + anthranilate. The protein operates within amino-acid biosynthesis; L-tryptophan biosynthesis; L-tryptophan from chorismate: step 2/5. Its function is as follows. Catalyzes the transfer of the phosphoribosyl group of 5-phosphorylribose-1-pyrophosphate (PRPP) to anthranilate to yield N-(5'-phosphoribosyl)-anthranilate (PRA). The sequence is that of Anthranilate phosphoribosyltransferase from Prochlorococcus marinus (strain MIT 9215).